The sequence spans 201 residues: uncharacterized protein (201 aa).

It belongs to the phosphatidylethanolamine-binding protein family.

This is an uncharacterized protein from Saccharomyces cerevisiae (strain ATCC 204508 / S288c) (Baker's yeast).